The sequence spans 142 residues: Protein archease (142 aa).

The Ca(2+) site is built by D12, D141, and I142.

It belongs to the archease family.

Its function is as follows. Activates the tRNA-splicing ligase complex by facilitating the enzymatic turnover of catalytic subunit RtcB. Acts by promoting the guanylylation of RtcB, a key intermediate step in tRNA ligation. Can also alter the NTP specificity of RtcB such that ATP, dGTP or ITP is used efficiently. The sequence is that of Protein archease from Pyrococcus furiosus (strain ATCC 43587 / DSM 3638 / JCM 8422 / Vc1).